The sequence spans 401 residues: Probable 2,3-bisphosphoglycerate-independent phosphoglycerate mutase (401 aa).

It belongs to the BPG-independent phosphoglycerate mutase family. A-PGAM subfamily.

The enzyme catalyses (2R)-2-phosphoglycerate = (2R)-3-phosphoglycerate. Its pathway is carbohydrate degradation; glycolysis; pyruvate from D-glyceraldehyde 3-phosphate: step 3/5. Catalyzes the interconversion of 2-phosphoglycerate and 3-phosphoglycerate. This chain is Probable 2,3-bisphosphoglycerate-independent phosphoglycerate mutase, found in Thermotoga petrophila (strain ATCC BAA-488 / DSM 13995 / JCM 10881 / RKU-1).